A 37-amino-acid chain; its full sequence is MVEVFLFGIVLGLIPITLAGLFVTAYLQYRRGDQLDL.

A helical membrane pass occupies residues 5 to 25; that stretch reads FLFGIVLGLIPITLAGLFVTA.

The protein belongs to the PetG family. As to quaternary structure, the 4 large subunits of the cytochrome b6-f complex are cytochrome b6, subunit IV (17 kDa polypeptide, PetD), cytochrome f and the Rieske protein, while the 4 small subunits are PetG, PetL, PetM and PetN. The complex functions as a dimer.

The protein localises to the plastid. Its subcellular location is the chloroplast thylakoid membrane. Its function is as follows. Component of the cytochrome b6-f complex, which mediates electron transfer between photosystem II (PSII) and photosystem I (PSI), cyclic electron flow around PSI, and state transitions. PetG is required for either the stability or assembly of the cytochrome b6-f complex. This is Cytochrome b6-f complex subunit 5 from Platanus occidentalis (Sycamore).